The following is a 182-amino-acid chain: ATP synthase subunit b, chloroplastic (182 aa).

The helical transmembrane segment at 33 to 51 (VLNIAILLSGVIYLGRNFL) threads the bilayer.

Belongs to the ATPase B chain family. As to quaternary structure, F-type ATPases have 2 components, F(1) - the catalytic core - and F(0) - the membrane proton channel. F(1) has five subunits: alpha(3), beta(3), gamma(1), delta(1), epsilon(1). F(0) has four main subunits: a(1), b(1), b'(1) and c(10-14). The alpha and beta chains form an alternating ring which encloses part of the gamma chain. F(1) is attached to F(0) by a central stalk formed by the gamma and epsilon chains, while a peripheral stalk is formed by the delta, b and b' chains.

The protein localises to the plastid. Its subcellular location is the chloroplast thylakoid membrane. In terms of biological role, f(1)F(0) ATP synthase produces ATP from ADP in the presence of a proton or sodium gradient. F-type ATPases consist of two structural domains, F(1) containing the extramembraneous catalytic core and F(0) containing the membrane proton channel, linked together by a central stalk and a peripheral stalk. During catalysis, ATP synthesis in the catalytic domain of F(1) is coupled via a rotary mechanism of the central stalk subunits to proton translocation. Component of the F(0) channel, it forms part of the peripheral stalk, linking F(1) to F(0). The polypeptide is ATP synthase subunit b, chloroplastic (Guillardia theta (Cryptophyte)).